We begin with the raw amino-acid sequence, 984 residues long: Ephrin type-B receptor 1 (984 aa).

Residues 1–182 (ETLMDTRTAT…FFKKCPSVVQ (182 aa)) form the Eph LBD domain. Over 1–541 (ETLMDTRTAT…KSELREQLPL (541 aa)) the chain is Extracellular. Fibronectin type-III domains are found at residues 303–413 (VPSG…TNQA) and 414–528 (APST…TLTD). N-linked (GlcNAc...) asparagine glycosylation is found at Asn-315, Asn-407, and Asn-480. The helical transmembrane segment at 542-562 (IAGSAAAGVVFIVSLVAISIV) threads the bilayer. Over 563-984 (CSRKRAYSKE…QMSQSPTSMA (422 aa)) the chain is Cytoplasmic. In terms of domain architecture, Protein kinase spans 619–882 (VKIEEVIGAG…EIVNTLDKMI (264 aa)). Residues 625-633 (IGAGEFGEV) and Lys-651 each bind ATP. The Proton acceptor role is filled by Asp-744. The SAM domain occupies 911–975 (TAFTSVEDWL…LNSIQSMRVQ (65 aa)). Positions 982-984 (SMA) match the PDZ-binding motif.

The protein belongs to the protein kinase superfamily. Tyr protein kinase family. Ephrin receptor subfamily. Heterotetramer upon binding of the ligand. The heterotetramer is composed of an ephrin dimer and a receptor dimer. Oligomerization is probably required to induce biological responses. Phosphorylated. Autophosphorylation is stimulated by ligands. In terms of tissue distribution, expressed at high levels in the 10-day embryo, and in adult brain, lung, heart and skeletal muscle. Low levels of expression detected in all other adult tissues tested.

Its subcellular location is the cell membrane. The protein localises to the early endosome membrane. The protein resides in the cell projection. It is found in the dendrite. It carries out the reaction L-tyrosyl-[protein] + ATP = O-phospho-L-tyrosyl-[protein] + ADP + H(+). Functionally, receptor tyrosine kinase which binds promiscuously transmembrane ephrin-B family ligands residing on adjacent cells, leading to contact-dependent bidirectional signaling into neighboring cells. The signaling pathway downstream of the receptor is referred to as forward signaling while the signaling pathway downstream of the ephrin ligand is referred to as reverse signaling. May play a role in axon guidance during nervous system development. May also play an important redundant role with other ephrin-B receptors in development and maturation of dendritic spines and synapse formation. More generally, may play a role in targeted cell migration and adhesion. Upon activation by ephrin-B ligands activates the MAPK/ERK and the JNK signaling cascades to regulate cell migration and adhesion respectively. In Gallus gallus (Chicken), this protein is Ephrin type-B receptor 1 (EPHB1).